An 860-amino-acid polypeptide reads, in one-letter code: Photoactivated adenylate cyclase subunit beta (860 aa).

The BLUF 1 domain occupies 56-149 (LRRLMYLSKS…GRMYGDWHMK (94 aa)). One can recognise a Guanylate cyclase 1 domain in the interval 205–333 (VVTFIYLVEF…DCINTTSRIA (129 aa)). Residues 420–443 (RPPIFDDTPKGKPRPRTPGYGGRQ) are disordered. The region spanning 471–563 (LTTLTYISQA…RAYPAEWTLT (93 aa)) is the BLUF 2 domain. Positions 619–748 (VMLATDICSF…AVSARVMEVE (130 aa)) constitute a Guanylate cyclase 2 domain. The segment at 819-860 (KPLALEPEEAKQDYRVSPGRMRHGDSGRRSNSAQGKRSTQVR) is disordered. Polar residues predominate over residues 847-860 (RSNSAQGKRSTQVR).

It belongs to the adenylyl cyclase class-4/guanylyl cyclase family. In terms of assembly, heterotetramer of two alpha and two beta subunits. Requires FAD as cofactor.

The protein localises to the cell projection. It localises to the cilium. The protein resides in the flagellum. It carries out the reaction ATP = 3',5'-cyclic AMP + diphosphate. Acts as a photoreceptor for the step-up photophobic response. This Euglena longa (Euglenophycean alga) protein is Photoactivated adenylate cyclase subunit beta.